The sequence spans 742 residues: Envelope glycoprotein H (742 aa).

An N-terminal signal peptide occupies residues 1–23 (MRPGLPSYLIILAVCLFSHLLSS). At 24–719 (RYGAEAVSEP…VVDATDSRLL (696 aa)) the chain is on the virion surface side. N-linked (GlcNAc...) asparagine; by host glycans are attached at residues asparagine 55, asparagine 62, asparagine 67, and asparagine 192. A disulfide bridge links cysteine 195 with cysteine 211. Residues 217–280 (YLIDELRYVK…QTEKHELLVL (64 aa)) form an interaction with gL region. Intrachain disulfides connect cysteine 330–cysteine 383, cysteine 495–cysteine 522, and cysteine 571–cysteine 624. 2 N-linked (GlcNAc...) asparagine; by host glycosylation sites follow: asparagine 641 and asparagine 700. Residues 720-740 (MMSVYALSAIIGIYLLYRMLK) form a helical membrane-spanning segment. At 741-742 (TC) the chain is on the intravirion side.

It belongs to the herpesviridae glycoprotein H family. Interacts with glycoprotein L (gL); this interaction is necessary for the correct processing and cell surface expression of gH. The heterodimer gH/gL seems to interact with gB trimers during fusion. Forms the envelope pentamer complex (PC) composed of gH, gL, UL128, UL130, and UL131A. The pentamer interacts with host NRP2. Forms the envelope trimer complex composed of gH, gL, and gO. The trimer interacts with host PDGFRA. The trimer also interacts with host EPHA2. The trimer also interacts with host TGFBR3. Interacts with UL116. In terms of processing, N-glycosylated, O-glycosylated, and sialylated.

It is found in the virion membrane. It localises to the host cell membrane. Its subcellular location is the host endosome membrane. Its function is as follows. The heterodimer glycoprotein H-glycoprotein L is required for the fusion of viral and plasma membranes leading to virus entry into the host cell. Following initial binding to host receptor, membrane fusion is mediated by the fusion machinery composed of gB and the heterodimer gH/gL. May also be involved in the fusion between the virion envelope and the outer nuclear membrane during virion morphogenesis. In human cytomegalovirus, forms two distincts complexes to mediate viral entry, a trimer and a pentamer at the surface of the virion envelope. The gH-gL-gO trimer is required for infection in fibroblasts by interacting with host PDGFRA, and in glioblastoma cells by interacting with host EPHA2. Thsi trimer may also be required in other cell types using host TGFBR3. The gH-gL-UL128-UL130-UL131A pentamer is essential for viral entry in epithelial, endothelial and myeloid cells via interaction with host NRP2. The sequence is that of Envelope glycoprotein H from Human cytomegalovirus (strain Merlin) (HHV-5).